The chain runs to 525 residues: GMP synthase [glutamine-hydrolyzing] (525 aa).

The Glutamine amidotransferase type-1 domain occupies 8–207 (KILILDFGSQ…AVAICGCGTN (200 aa)). C85 functions as the Nucleophile in the catalytic mechanism. Active-site residues include H181 and E183. Positions 208-400 (WKPSSIIEDA…LGLPYNMLYR (193 aa)) constitute a GMPS ATP-PPase domain. An ATP-binding site is contributed by 235-241 (SGGVDSS).

In terms of assembly, homodimer.

It carries out the reaction XMP + L-glutamine + ATP + H2O = GMP + L-glutamate + AMP + diphosphate + 2 H(+). The protein operates within purine metabolism; GMP biosynthesis; GMP from XMP (L-Gln route): step 1/1. In terms of biological role, catalyzes the synthesis of GMP from XMP. The chain is GMP synthase [glutamine-hydrolyzing] from Shewanella denitrificans (strain OS217 / ATCC BAA-1090 / DSM 15013).